A 474-amino-acid chain; its full sequence is Vitamin D-binding protein (474 aa).

Residues 1-16 (MKRVLVLLLAVAFGHA) form the signal peptide. Albumin domains follow at residues 17–208 (LERG…QLKH), 209–394 (LSLL…LLKK), and 395–474 (ELSS…KNIL). Intrachain disulfides connect cysteine 29/cysteine 75, cysteine 74/cysteine 83, cysteine 96/cysteine 112, cysteine 111/cysteine 122, cysteine 145/cysteine 190, cysteine 189/cysteine 198, cysteine 220/cysteine 266, cysteine 265/cysteine 273, cysteine 286/cysteine 300, cysteine 299/cysteine 311, cysteine 335/cysteine 376, cysteine 375/cysteine 384, cysteine 407/cysteine 453, and cysteine 452/cysteine 462.

The protein belongs to the ALB/AFP/VDB family. As to quaternary structure, associates with membrane-bound immunoglobulin on the surface of B-lymphocytes and with IgG Fc receptor on the membranes of T-lymphocytes. Interacts with LRP2; the interaction is required for renal uptake of GC in complex with 25-hydroxyvitamin D3. In terms of processing, allele GC*1S is O-glycosylated at Thr-436. The trisaccharide sugar moiety can be modified by the successive removal of neuraminic acid and galactose leaving an O-mceeN-acetyl-galactosamine. This conversion is thought to produce a macrophage-activating factor (Gc-MAF). Only a minor proportion of plasma GC is O-glycosylated. The potential N-glycosylation site predicted at Asn-288 is thought to be nonglycosylated. As to expression, expressed in the liver. Found in plasma, ascites, cerebrospinal fluid and urine.

It is found in the secreted. Its function is as follows. Involved in vitamin D transport and storage, scavenging of extracellular G-actin, enhancement of the chemotactic activity of C5 alpha for neutrophils in inflammation and macrophage activation. The sequence is that of Vitamin D-binding protein (GC) from Homo sapiens (Human).